The chain runs to 551 residues: Rqc2 homolog RqcH (551 aa).

This sequence belongs to the NEMF family. Associates with stalled 50S ribosomal subunits, binds to RqcP. Interacts with human fibronectin.

Its subcellular location is the secreted. The protein resides in the capsule. The protein localises to the cell surface. It localises to the cytoplasm. Its function is as follows. Key component of the ribosome quality control system (RQC), a ribosome-associated complex that mediates the extraction of incompletely synthesized nascent chains from stalled ribosomes and their subsequent degradation. RqcH recruits Ala-charged tRNA, and with RqcP directs the elongation of stalled nascent chains on 50S ribosomal subunits, leading to non-templated C-terminal alanine extensions (Ala tail). The Ala tail promotes nascent chain degradation. May add between 1 and at least 8 Ala residues. Binds to stalled 50S ribosomal subunits. Plays a significant role in virulence. Recombinant protein binds to immobilized human fibronectin; binding is saturable and competed by heparin. Purified protein inhibits binding of whole cells to fibronectin. In Streptococcus pneumoniae serotype 2 (strain D39 / NCTC 7466), this protein is Rqc2 homolog RqcH.